The primary structure comprises 186 residues: Methyl-CpG-binding domain protein 3-like 1 (186 aa).

Residues 1–104 (MGKTSQRKQC…TSTDTVASAS (104 aa)) are transcription repressor.

Belongs to the MBD3L family. Highly expressed in testis. Not detected in the other tissues tested.

The protein localises to the nucleus. Functionally, transcriptional repressor. This Mus musculus (Mouse) protein is Methyl-CpG-binding domain protein 3-like 1 (Mbd3l1).